The sequence spans 762 residues: Endonuclease MutS2 (762 aa).

Positions 1–22 are disordered; the sequence is MSDAPKRSLNPTLMMNNNNTPP. Residues 9–20 show a composition bias toward low complexity; that stretch reads LNPTLMMNNNNT. 333–340 lines the ATP pocket; the sequence is GVNAGGKT. One can recognise a Smr domain in the interval 688–762; it reads LDLRGQRSEE…GGSGVKIVKL (75 aa).

The protein belongs to the DNA mismatch repair MutS family. MutS2 subfamily. As to quaternary structure, homodimer. Binds to stalled ribosomes, contacting rRNA.

ATPase activity is stimulated by DNA. In terms of biological role, endonuclease that is involved in the suppression of homologous recombination and may thus have a key role in the control of bacterial genetic diversity. Also involved in repairing oxidative DNA damage. Has ATPase activity. Binds DNA. Endonuclease that is involved in the suppression of homologous recombination and thus may have a key role in the control of bacterial genetic diversity. Its function is as follows. Acts as a ribosome collision sensor, splitting the ribosome into its 2 subunits. Detects stalled/collided 70S ribosomes which it binds and splits by an ATP-hydrolysis driven conformational change. Acts upstream of the ribosome quality control system (RQC), a ribosome-associated complex that mediates the extraction of incompletely synthesized nascent chains from stalled ribosomes and their subsequent degradation. Probably generates substrates for RQC. In Helicobacter pylori (strain ATCC 700392 / 26695) (Campylobacter pylori), this protein is Endonuclease MutS2.